Reading from the N-terminus, the 155-residue chain is MRIRLISVGGRMPGWAAEGYREYAQRLGGGISLELVEIPLGRRGKGADPRRALDEEGRRMLKALGDEQVVALDVRGKAWDTPALARELDGWLHDGRDLALLVGGPDGLHPDCLARAERRWSLSPLTFPHMLVRVLLAEQLYRAWSLLQGHPYHRA.

S-adenosyl-L-methionine is bound by residues Leu72, Gly103, and 122 to 127 (LSPLTF).

It belongs to the RNA methyltransferase RlmH family. As to quaternary structure, homodimer.

The protein localises to the cytoplasm. It catalyses the reaction pseudouridine(1915) in 23S rRNA + S-adenosyl-L-methionine = N(3)-methylpseudouridine(1915) in 23S rRNA + S-adenosyl-L-homocysteine + H(+). Specifically methylates the pseudouridine at position 1915 (m3Psi1915) in 23S rRNA. This chain is Ribosomal RNA large subunit methyltransferase H, found in Alkalilimnicola ehrlichii (strain ATCC BAA-1101 / DSM 17681 / MLHE-1).